The sequence spans 144 residues: Small ribosomal subunit protein bS6 (144 aa).

Residues 97-144 form a disordered region; sequence DTEQSLIMKSKDEKGDKPERSERRRRDDEEVDAAPAATDTDGDNAEAA. The segment covering 105-124 has biased composition (basic and acidic residues); it reads KSKDEKGDKPERSERRRRDD.

This sequence belongs to the bacterial ribosomal protein bS6 family.

Its function is as follows. Binds together with bS18 to 16S ribosomal RNA. The polypeptide is Small ribosomal subunit protein bS6 (Xanthomonas campestris pv. campestris (strain B100)).